The chain runs to 778 residues: MNNKIIETLEFHKVRQKIEPYLLTEQGFEELRQLEPMVEVHRIQQAFDELTDIAQIFVENPYFSLAATSDIGPAMRRLELDTDLNIAELLAVKKVLEVSKSLLDFYGNLENVSLSQQLDKLFEKIELFPHLQGSLQSINDAGFVEDFASEKLARIRRKIREAEDQVRQVMQDILKTKGDMLSDSILASRNGRNVLPVKNTYRNKIAGVVHDISASGSTVYIEPRAVVTLNEEISHLRAEERHELNRILQELSDMLRPHGGVIRNNAWLIGHIDFVRAKHLFARDHQAVVPKLSEKQDIALLNVRHPLIAKPVPNDLYFGSQLTAIVITGPNTGGKTIMLKTLGLTHLMAQSGLPILADKGSRVAIFKEIFADIGDEQSIEQSLSTFSSHMTHTVEILRAADQDSLILFDELGAGTDPQEGASLAMAILDDLRLRGIKTMATTHYPELKAYGIETSGIENASMEFDSNSLRPTYKFMQGVPGRSNAFEIARRLGLSDIIIQSAQSWTDTDSDVNRIIEKLESQTVESRQRLDKIRDVEQENYKMNRALRKLYDELNRERENELNKARLEAKEIVDMALAESEDILKNLHAAASLKPHQIIEAKAELKKLAPEVVDLSKNKVLKKAKIKREAKVGDDIIVTAYGQRGTLTNQLKDGRWEAQVGLIKMTLAKDEFELVKAEKAEQPKKRQVHTVKRANVRGPKARLDLRGKRYEEAMMELDEFIDQALLNNLAQVDIVHGIGTGVIREGVTKYLRRNKQIKEFGYAPQNAGGSGCTIVTFK.

329–336 (GPNTGGKT) is a binding site for ATP. Residues 703-778 (LDLRGKRYEE…GSGCTIVTFK (76 aa)) form the Smr domain.

The protein belongs to the DNA mismatch repair MutS family. MutS2 subfamily. In terms of assembly, homodimer. Binds to stalled ribosomes, contacting rRNA.

Its function is as follows. Endonuclease that is involved in the suppression of homologous recombination and thus may have a key role in the control of bacterial genetic diversity. In terms of biological role, acts as a ribosome collision sensor, splitting the ribosome into its 2 subunits. Detects stalled/collided 70S ribosomes which it binds and splits by an ATP-hydrolysis driven conformational change. Acts upstream of the ribosome quality control system (RQC), a ribosome-associated complex that mediates the extraction of incompletely synthesized nascent chains from stalled ribosomes and their subsequent degradation. Probably generates substrates for RQC. In Streptococcus suis (strain 98HAH33), this protein is Endonuclease MutS2.